The chain runs to 384 residues: MTNLIKNVKDAFNSVLSYAPTHILQAPGRVNLIGEHTDYNDGFVLPCAINYQTVVAAAKRDDNIVRVVSVDYGNETDEFDITQEITFQENKMWSNYIRGVVKCLIGRGYEFKGADISVSGNVPQGAGLSSSAALEVVIGQTFKELYNLDISQAEIALNGQQAENEFVGCNCGIMDQMISAEGNENHAMLLDCRSLETTAVSMPEDMSVVIINSNKKRGLVDSEYNTRREQCEEAARIFGVKALRDVTIEEFNAKAHELDEMVAKRARHVITENDRTEEAAKVLASGDMKRMAVLMAESHASMRDDFEITVSEVDTLVDIVKNVIGAEGGVRMTGGGFGGCIVALVPPMLVDEVKAAVEELYEAKTGLKESIYVCQATNGAGLVL.

Position 35 to 38 (35 to 38) interacts with substrate; that stretch reads EHTD. ATP-binding positions include serine 69 and 125 to 131; that span reads GAGLSSS. Positions 131 and 163 each coordinate Mg(2+). The active-site Proton acceptor is aspartate 175. Tyrosine 224 serves as a coordination point for substrate.

Belongs to the GHMP kinase family. GalK subfamily.

The protein localises to the cytoplasm. The catalysed reaction is alpha-D-galactose + ATP = alpha-D-galactose 1-phosphate + ADP + H(+). Its pathway is carbohydrate metabolism; galactose metabolism. Catalyzes the transfer of the gamma-phosphate of ATP to D-galactose to form alpha-D-galactose-1-phosphate (Gal-1-P). The sequence is that of Galactokinase from Aliivibrio fischeri (strain MJ11) (Vibrio fischeri).